The sequence spans 436 residues: mRNA cap guanine-N(7) methyltransferase (436 aa).

The tract at residues 1-50 is disordered; sequence MSTKPEKPIWMSQEDYDRQYGSITGDESSTVSKKDSKVTANAPGDGNGSL. In terms of domain architecture, mRNA cap 0 methyltransferase spans 141–424; that stretch reads SPIIKLRNFN…FYTMFAFRKV (284 aa). Position 150-151 (150-151) interacts with mRNA; sequence NN. Positions 154, 172, 194, 223, 249, and 254 each coordinate S-adenosyl-L-methionine.

Belongs to the class I-like SAM-binding methyltransferase superfamily. mRNA cap 0 methyltransferase family.

The protein localises to the nucleus. The catalysed reaction is a 5'-end (5'-triphosphoguanosine)-ribonucleoside in mRNA + S-adenosyl-L-methionine = a 5'-end (N(7)-methyl 5'-triphosphoguanosine)-ribonucleoside in mRNA + S-adenosyl-L-homocysteine. Its function is as follows. Responsible for methylating the 5'-cap structure of mRNAs. In Saccharomyces cerevisiae (strain ATCC 204508 / S288c) (Baker's yeast), this protein is mRNA cap guanine-N(7) methyltransferase (ABD1).